A 346-amino-acid polypeptide reads, in one-letter code: Ribonucleoside-diphosphate reductase subunit beta (346 aa).

Positions 89, 120, and 123 each coordinate Fe cation. Residue Tyr129 is part of the active site. Residues Glu193, Glu227, and His230 each coordinate Fe cation.

The protein belongs to the ribonucleoside diphosphate reductase small chain family. As to quaternary structure, tetramer of two alpha and two beta subunits. Requires Fe cation as cofactor.

The enzyme catalyses a 2'-deoxyribonucleoside 5'-diphosphate + [thioredoxin]-disulfide + H2O = a ribonucleoside 5'-diphosphate + [thioredoxin]-dithiol. Provides the precursors necessary for DNA synthesis. Catalyzes the biosynthesis of deoxyribonucleotides from the corresponding ribonucleotides. The polypeptide is Ribonucleoside-diphosphate reductase subunit beta (nrdB) (Chlamydia muridarum (strain MoPn / Nigg)).